A 668-amino-acid polypeptide reads, in one-letter code: SHC SH2 domain-binding protein 1 (668 aa).

Ala-2 is modified (N-acetylalanine). 3 positions are modified to phosphoserine: Ser-31, Ser-44, and Ser-273. 5 PbH1 repeats span residues 428–451 (GMDVKISGIKFIQHDSVEGILIIH), 452–473 (HGKTTLENCVLQCETTGVTVRT), 474–496 (SAELFMKNSDVYGAKGAGIEIYP), 497–518 (GSKCTLTDNGIHHCKEGILIKD), and 526–548 (IPKISMINNVIHNNEGYGVVLVK). Ser-630 is modified (phosphoserine).

As to quaternary structure, interacts directly with isoform p52shc of SHC1 via its SH2 domain. Interacts with TRIM71; leading to enhanced SHCBP1 protein stability. Interacts with both members of the centralspindlin complex, KIF23 and RACGAP1. As to expression, expressed in spleen, lung and heart with higher expression in testis. No expression in brain, liver and skeletal muscle. Elevated expression in actively cycling cells.

It localises to the midbody. The protein resides in the cytoplasm. It is found in the cytoskeleton. The protein localises to the spindle. Its function is as follows. May play a role in signaling pathways governing cellular proliferation, cell growth and differentiation. May be a component of a novel signaling pathway downstream of Shc. Acts as a positive regulator of FGF signaling in neural progenitor cells. The polypeptide is SHC SH2 domain-binding protein 1 (Shcbp1) (Mus musculus (Mouse)).